We begin with the raw amino-acid sequence, 633 residues long: MA3 DOMAIN-CONTAINING TRANSLATION REGULATORY FACTOR 4 (633 aa).

MI domains follow at residues 56–177 (DYKR…RAKK), 220–341 (ETKR…ERSD), 351–472 (RFKK…EISN), and 514–633 (DAKD…STDS). The Nuclear localization signal 1 motif lies at 94–101 (VKRLVSMA). The Nuclear localization signal 2 motif lies at 389-396 (LKKLITLA).

This sequence belongs to the PDCD4 family. As to quaternary structure, binds to EIF4A1. The association with ribosomes is modulated by cellular energy status and TOR activity. Mostly expressed, at low levels, in rosette leaves and flower buds, and, to a lower extent, in roots, stems, cauline leaves and flowers.

Its subcellular location is the nucleus. It localises to the cytoplasm. It is found in the cytosol. Functionally, involved in target of rapamycin (TOR)-regulated translation control, especially under energy-deficient conditions. The protein is MA3 DOMAIN-CONTAINING TRANSLATION REGULATORY FACTOR 4 of Arabidopsis thaliana (Mouse-ear cress).